The primary structure comprises 366 residues: MKVEFMQGNQACAKGAIKAGCRFFAGYPITPSTEIAEAMARELPKVGGYYIQMEDEIGSIAAVIGASWGGLKAMTATSGPGFSLMQENIGFAYMTETPCVVVDIQRGGPSTGQPTMASQGDMMQCRWGSHGDYEVIALAPSSVQEMYDFTIMAFNYAEKYRIPVFVMADEIVGHMREKVILHDNIEIINRKKPEEKPCKKPYPFDKLIPEMPVFGEGYNVHITGLTHDERGYPDVSPETHDKLVRRIVNKIRKNKDEIIKWEGENLDAEIVFVCYGSPSRTVKHAVRNLREKGLDVGYIRLITVYPFPDDLLKKLKAKKVVVPEMNLGQIYYEVERVCKKAEEVILVDKIGGELHRPEELERAVLG.

Heterotetramer of the KorA, KorB, KorC and KorD subunits.

It catalyses the reaction 2 oxidized [2Fe-2S]-[ferredoxin] + 2-oxoglutarate + CoA = succinyl-CoA + 2 reduced [2Fe-2S]-[ferredoxin] + CO2 + H(+). In Methanocaldococcus jannaschii (strain ATCC 43067 / DSM 2661 / JAL-1 / JCM 10045 / NBRC 100440) (Methanococcus jannaschii), this protein is 2-oxoglutarate synthase subunit KorA (korA).